A 693-amino-acid chain; its full sequence is Sister chromatid cohesion 1 protein 3 (693 aa).

Disordered regions lie at residues 167 to 250 (IPMD…PGTV), 262 to 361 (DLSP…KNFD), 460 to 511 (PVSP…TFDN), and 545 to 573 (TQSGNWETESYRTEPSTSTVPEDLPGQRN). Basic and acidic residues-rich tracts occupy residues 178–201 (VSRHTGEIDVETAHETGPDNEPRD) and 232–243 (TEERIPNSERND). Residues 264-277 (SPTSHPSFAAQQQD) show a composition bias toward polar residues. A compositionally biased stretch (basic and acidic residues) spans 278 to 295 (VRVERTESLDETLNEKEP). The span at 316–325 (RSGSPGSAAG) shows a compositional bias: low complexity. 2 stretches are compositionally biased toward polar residues: residues 465–483 (PDSTNPDSTVQLSPAQQTE) and 545–564 (TQSGNWETESYRTEPSTSTV).

The protein belongs to the rad21 family. In terms of assembly, component of the cohesin complex. In terms of tissue distribution, low expression in shoots, buds, siliques, leaves and roots. Found in, but not limited to, actively dividing cells: in procambium, protoderm and ground meristem in roots, and in shoot and floral meristems.

Its subcellular location is the nucleus. May be involved in sister chromatid cohesion during mitosis. The chain is Sister chromatid cohesion 1 protein 3 (SYN3) from Arabidopsis thaliana (Mouse-ear cress).